Here is a 65-residue protein sequence, read N- to C-terminus: Chymotrypsin/elastase isoinhibitors 2 to 5 (65 aa).

Cystine bridges form between C4–C37, C13–C32, C16–C28, C20–C59, and C39–C53. The TIL domain occupies 4–59 (CGKNEVWTECTGCELKCGQDEKTPCALMCRPPSCECTPGRGMRRTHDGKCVPVSEC).

This sequence belongs to the serine protease inhibitor-like (TIL domain-containing) family.

It localises to the secreted. In terms of biological role, defends the organism against the host's proteinases. This Ascaris suum (Pig roundworm) protein is Chymotrypsin/elastase isoinhibitors 2 to 5.